The chain runs to 670 residues: PML-RARA-regulated adapter molecule 1 (670 aa).

The segment at 1–561 (MAHHLPAAME…PQQLPPMDPK (561 aa)) is disordered. Residues 31–43 (DLPKKPPKPEFGK) show a composition bias toward basic and acidic residues. 4 consecutive repeat copies span residues 70–81 (KPPPPEVTDLPK), 82–93 (KPPPPEVTDLPK), 94–105 (KPPPPEVTDLPK), and 106–117 (KPPPPEVTDLPK). Positions 70-165 (KPPPPEVTDL…SLPEPGAPAR (96 aa)) are 4 X 12 AA repeats of K-P-P-[PQ]-P-[EQ]-[VAF]-T-D-L-P-K. Residues 114–129 (DLPKKPSKLELSDLSK) are compositionally biased toward basic and acidic residues. Serine 340 bears the Phosphoserine mark. Residues 386 to 398 (SSASESSLPAAVA) show a composition bias toward low complexity. A compositionally biased stretch (pro residues) spans 454 to 463 (PAKPPLPPGP). The segment covering 504-514 (EIYELYDDVEP) has biased composition (acidic residues). Positions 515 to 528 (RDDSSPSPKGRDEA) are enriched in basic and acidic residues. Residues 571–649 (KAEREFRKKF…PRTALLPLET (79 aa)) enclose the SH3 domain.

In terms of assembly, interacts with SKAP2, LCP2 and DBNL. May interact with LYN. Interacts with NEK6. In terms of processing, may be phosphorylated on tyrosines. In terms of tissue distribution, expressed in peripheral blood leukocytes and bone marrow. Expressed in monocytes, and to a lesser extent in granulocytes and lymphocytes. Not expressed in non hematopoietic tissues except in lung.

Functionally, may be involved in myeloid differentiation. May be involved in integrin signaling in neutrophils. Binds to PtdIns(4)P. The sequence is that of PML-RARA-regulated adapter molecule 1 (PRAM1) from Homo sapiens (Human).